A 248-amino-acid polypeptide reads, in one-letter code: Isoamyl acetate-hydrolyzing esterase 1 homolog (248 aa).

Serine 24 acts as the Nucleophile in catalysis. The residue at position 63 (lysine 63) is an N6-succinyllysine. Aspartate 196 acts as the Proton donor in catalysis. Catalysis depends on histidine 199, which acts as the Proton acceptor.

The protein belongs to the 'GDSL' lipolytic enzyme family. IAH1 subfamily.

In terms of biological role, probable lipase. This Homo sapiens (Human) protein is Isoamyl acetate-hydrolyzing esterase 1 homolog (IAH1).